Here is a 267-residue protein sequence, read N- to C-terminus: PHD finger protein ALFIN-LIKE 7 (267 aa).

The disordered stretch occupies residues 162–207 (TKVSNGSSKSNKSNPKPSKQSNSNSKPAKPPQPKDEEDSGPEGAED). Residues 165 to 188 (SNGSSKSNKSNPKPSKQSNSNSKP) show a composition bias toward low complexity. Acidic residues predominate over residues 196–207 (DEEDSGPEGAED). The PHD-type zinc finger occupies 211-263 (AYMCGACGETYANGEFWICCDVCEKWFHGKCVRITPAKAEHIKQYKCPGCSSK).

This sequence belongs to the Alfin family. Interacts with H3K4me3 and to a lesser extent with H3K4me2.

The protein resides in the nucleus. Its function is as follows. Histone-binding component that specifically recognizes H3 tails trimethylated on 'Lys-4' (H3K4me3), which mark transcription start sites of virtually all active genes. The polypeptide is PHD finger protein ALFIN-LIKE 7 (Oryza sativa subsp. indica (Rice)).